Here is a 75-residue protein sequence, read N- to C-terminus: Cytochrome c oxidase subunit 6C (75 aa).

Topologically, residues 1–13 (MASEVLAKPQMRG) are mitochondrial matrix. Residues 14 to 54 (LLARRLRIHMVGAFLISLGVAALYKFGVAEPRKKAYADFYK) form a helical membrane-spanning segment. The Mitochondrial intermembrane segment spans residues 55-75 (NYSPEKDFEEMKKAGVFRSIK).

It belongs to the cytochrome c oxidase subunit 6c family. As to quaternary structure, component of the cytochrome c oxidase (complex IV, CIV), a multisubunit enzyme composed of 14 subunits. The complex is composed of a catalytic core of 3 subunits MT-CO1, MT-CO2 and MT-CO3, encoded in the mitochondrial DNA, and 11 supernumerary subunits COX4I, COX5A, COX5B, COX6A, COX6B, COX6C, COX7A, COX7B, COX7C, COX8 and NDUFA4, which are encoded in the nuclear genome. The complex exists as a monomer or a dimer and forms supercomplexes (SCs) in the inner mitochondrial membrane with NADH-ubiquinone oxidoreductase (complex I, CI) and ubiquinol-cytochrome c oxidoreductase (cytochrome b-c1 complex, complex III, CIII), resulting in different assemblies (supercomplex SCI(1)III(2)IV(1) and megacomplex MCI(2)III(2)IV(2)).

It is found in the mitochondrion inner membrane. It participates in energy metabolism; oxidative phosphorylation. In terms of biological role, component of the cytochrome c oxidase, the last enzyme in the mitochondrial electron transport chain which drives oxidative phosphorylation. The respiratory chain contains 3 multisubunit complexes succinate dehydrogenase (complex II, CII), ubiquinol-cytochrome c oxidoreductase (cytochrome b-c1 complex, complex III, CIII) and cytochrome c oxidase (complex IV, CIV), that cooperate to transfer electrons derived from NADH and succinate to molecular oxygen, creating an electrochemical gradient over the inner membrane that drives transmembrane transport and the ATP synthase. Cytochrome c oxidase is the component of the respiratory chain that catalyzes the reduction of oxygen to water. Electrons originating from reduced cytochrome c in the intermembrane space (IMS) are transferred via the dinuclear copper A center (CU(A)) of subunit 2 and heme A of subunit 1 to the active site in subunit 1, a binuclear center (BNC) formed by heme A3 and copper B (CU(B)). The BNC reduces molecular oxygen to 2 water molecules using 4 electrons from cytochrome c in the IMS and 4 protons from the mitochondrial matrix. In Saimiri sciureus (Common squirrel monkey), this protein is Cytochrome c oxidase subunit 6C (COX6C).